The sequence spans 332 residues: UBA domain-containing protein Mud1 (332 aa).

Asp-127 is a catalytic residue. The segment at 246–298 (GLGIEPASKASASSPNPQSGTRLGTKESVAPNNEGSSNPPSLVNPPTDPGLNS) is disordered. Positions 251-264 (PASKASASSPNPQS) are enriched in low complexity. Polar residues predominate over residues 275 to 286 (APNNEGSSNPPS). In terms of domain architecture, UBA spans 291 to 332 (PTDPGLNSKIAQLVSMGFDPLEAAQALDAANGDLDVAASFLL).

The protein belongs to the DDI1 family. As to quaternary structure, homodimer. Interacts (via UBA domain) with polyubiquitin (polyUb) chains (via Lys-48-linked polyUbs). Has weak binding affinity for monoubiquitin. According to another report, has no affinity for monoubiquitin.

It is found in the cytoplasm. Its subcellular location is the cell membrane. Its function is as follows. Recognizes and binds polyubiquitin chains. Acts as a linker between the 19S proteasome and polyubiquitinated proteins via UBA domain interactions with ubiquitin for their subsequent degradation. Aspartic protease. Appears to act as negative regulator of constitutive exocytosis. May act at the level of secretory vesicle docking and fusion as a competitive inhibitor of SNARE assembly. Required for S-phase checkpoint control. The protein is UBA domain-containing protein Mud1 of Schizosaccharomyces pombe (strain 972 / ATCC 24843) (Fission yeast).